A 517-amino-acid chain; its full sequence is Ribonuclease Y (517 aa).

A helical membrane pass occupies residues Glu2–Ile22. The KH domain maps to Thr207–Leu267. The HD domain maps to Val333–Ser426.

This sequence belongs to the RNase Y family.

The protein localises to the cell membrane. Endoribonuclease that initiates mRNA decay. The chain is Ribonuclease Y from Petrotoga mobilis (strain DSM 10674 / SJ95).